The primary structure comprises 120 residues: MISKILIAACALLLISHLVLAVPYLEDGLNSLHNRTGESDETRGYTIQLLKEMPEDDAVEDYSADNLERLLQNTQKRSCIRRFGRCDHRPNDCCYNSSCRCNLWGSNCRCQRMGLFQKWG.

The first 21 residues, 1–21, serve as a signal peptide directing secretion; sequence MISKILIAACALLLISHLVLA. The propeptide occupies 22–63; that stretch reads VPYLEDGLNSLHNRTGESDETRGYTIQLLKEMPEDDAVEDYS. 4 cysteine pairs are disulfide-bonded: Cys79–Cys94, Cys86–Cys99, Cys93–Cys110, and Cys101–Cys108.

It belongs to the xibalbin-1 family. As to expression, expressed by the venom gland. Not found in the whole body.

It localises to the secreted. Probable neurotoxin. Strongly inhibits voltage-gated potassium channels (Kv1.1/KCNA1, Kv1.2/KCNA2, Kv1.3/KCNA3, and Kv1.6/KCNA6, with the highest toxicity against Kv1.6 (74% inhibition at 1 uM)) and mildly inhibits sodium channels (Nav1.2/SCN2A, Nav1.4/SCN4A, Nav1.5/SCN5A, Nav1.6/SCN8A, and BgNav). Induces activation of protein kinase A type II (PKA-II) and MAP kinase Erk1/2 in primary nociceptive and non-nociceptive sensory neurons. Does not show cytotoxic activity. Does not have an impact on Ca2+, cAMP, and NO signaling in the cell types analyzed. Does not interfere with the adhesion of leukocytes to endothelial cells. This Xibalbanus tulumensis (Blind cave remipede) protein is Xibalbin-1.